The primary structure comprises 535 residues: Serum response factor-binding protein 1 (535 aa).

Coiled-coil stretches lie at residues leucine 5–arginine 27 and leucine 107–lysine 177. 6 stretches are compositionally biased toward basic and acidic residues: residues alanine 128–lysine 151, lysine 159–leucine 191, alanine 205–valine 325, aspartate 361–tyrosine 376, serine 406–lysine 432, and threonine 460–lysine 472. Disordered stretches follow at residues alanine 128–proline 435 and threonine 453–aspartate 535.

Its subcellular location is the cytoplasm. It is found in the perinuclear region. In terms of biological role, may be involved in regulating transcriptional activation of cardiac genes during the aging process. May play a role in biosynthesis and/or processing of SLC2A4 in adipose cells. This is Serum response factor-binding protein 1 from Xenopus tropicalis (Western clawed frog).